A 268-amino-acid polypeptide reads, in one-letter code: Probable ribosomal RNA small subunit methyltransferase A (268 aa).

The S-adenosyl-L-methionine site is built by His-23, Leu-25, Gly-50, Glu-71, Asp-95, and Asn-110.

It belongs to the class I-like SAM-binding methyltransferase superfamily. rRNA adenine N(6)-methyltransferase family. RsmA subfamily.

The protein resides in the cytoplasm. Its function is as follows. Specifically dimethylates two adjacent adenosines in the loop of a conserved hairpin near the 3'-end of 16S rRNA in the 30S particle. May play a critical role in biogenesis of 30S subunits. The chain is Probable ribosomal RNA small subunit methyltransferase A from Pyrococcus horikoshii (strain ATCC 700860 / DSM 12428 / JCM 9974 / NBRC 100139 / OT-3).